The primary structure comprises 115 residues: Large ribosomal subunit protein bL20 (115 aa).

This sequence belongs to the bacterial ribosomal protein bL20 family.

Functionally, binds directly to 23S ribosomal RNA and is necessary for the in vitro assembly process of the 50S ribosomal subunit. It is not involved in the protein synthesizing functions of that subunit. The protein is Large ribosomal subunit protein bL20 of Malacoplasma penetrans (strain HF-2) (Mycoplasma penetrans).